Reading from the N-terminus, the 225-residue chain is MSVTLKVEEREVRPRSLRKQLRHEGKALGVVYGYKVESTPISFDEKELVKVIRDHGENVLVALQIGGKKVNTLINKLDMDIFTPTIKHVEFIAVKMDEETEVETDIVLVGEAAGAKLGGFLSQTLFKVTVAATPDKLPERIEVDVTELAIGDSITVADLPEEKDFRVVTEGDIQVAAVVESTLEAELEEIEEAEAEAQATDADTATDDSEQTSEEQAEENKEDKE.

A disordered region spans residues 188 to 225 (EEIEEAEAEAQATDADTATDDSEQTSEEQAEENKEDKE). The segment covering 204 to 217 (TATDDSEQTSEEQA) has biased composition (acidic residues).

Belongs to the bacterial ribosomal protein bL25 family. CTC subfamily. As to quaternary structure, part of the 50S ribosomal subunit; part of the 5S rRNA/L5/L18/L25 subcomplex. Contacts the 5S rRNA. Binds to the 5S rRNA independently of L5 and L18.

In terms of biological role, this is one of the proteins that binds to the 5S RNA in the ribosome where it forms part of the central protuberance. The sequence is that of Large ribosomal subunit protein bL25 from Exiguobacterium sibiricum (strain DSM 17290 / CCUG 55495 / CIP 109462 / JCM 13490 / 255-15).